The primary structure comprises 58 residues: Large ribosomal subunit protein bL32c (58 aa).

Residues 1–23 (MAVPKKRTSKAKKNARKSVWKKK) form a disordered region.

It belongs to the bacterial ribosomal protein bL32 family.

It localises to the plastid. The protein resides in the chloroplast. The sequence is that of Large ribosomal subunit protein bL32c (rpl32-A) from Trieres chinensis (Marine centric diatom).